The sequence spans 390 residues: Homeobox protein Meis1 (390 aa).

Positions 108–192 (GGDVCSSESF…IDLVIDDREG (85 aa)) constitute an MEIS N-terminal domain. Positions 190 to 202 (REGGSKSDSEDVT) are enriched in basic and acidic residues. The segment at 190 to 279 (REGGSKSDSE…KKRHKKRGIF (90 aa)) is disordered. The span at 203–213 (RSANLTDQPSW) shows a compositional bias: polar residues. A DNA-binding region (homeobox; TALE-type) is located at residues 272-334 (RHKKRGIFPK…NARRRIVQPM (63 aa)). Residues 299–329 (YPSEEQKKQLAQDTGLTILQVNNWFINARRR) form an interaction with DNA region. The tract at residues 335–390 (IDQSNRAVSQGTPYNPDGQPMGGFVMDGQQHMGIRAPGPMSGMGMNMGMEGQWHYM) is required for transcriptional activation.

Belongs to the TALE/MEIS homeobox family. Interacts with the N-terminal region of PBX1 to form a heterodimer which binds DNA including a cAMP-responsive sequence in CYP17. Also forms heterodimers with PBX2. Forms heterotrimers with PBX1 or PBX2 and a number of HOX proteins including HOXA9, HOXD4 and HOXD9 where it acts as a non-DNA-binding partner. Also forms heterotrimers with PBX1 and HOX proteins including HOXD9 and HOXD10 where PBX1 is the non-DNA-binding partner. Heterodimer with DLX3. Heterodimer with HOXB13. As to expression, expressed at high levels in the lung with lower levels detected in the heart and brain. Expressed in pancreatic islets (beta-cells and non-beta-cells).

Its subcellular location is the nucleus. Its function is as follows. Acts as a transcriptional regulator of PAX6. Also acts as a transcriptional activator of PF4 in complex with PBX1 or PBX2. Required for hematopoiesis, megakaryocyte lineage development and vascular patterning. May function as a cofactor for HOXA7 and HOXA9 in the induction of myeloid leukemias. The protein is Homeobox protein Meis1 (Meis1) of Mus musculus (Mouse).